We begin with the raw amino-acid sequence, 445 residues long: Tubulin beta-3 chain (445 aa).

GTP-binding residues include Gln11, Glu69, Ser138, Gly142, Thr143, Gly144, Asn204, and Asn226. Position 69 (Glu69) interacts with Mg(2+). The segment at 425–445 is disordered; the sequence is YQDATAEEYDEEEQDGEEEHD. The segment covering 429–445 has biased composition (acidic residues); sequence TAEEYDEEEQDGEEEHD.

This sequence belongs to the tubulin family. As to quaternary structure, dimer of alpha and beta chains. A typical microtubule is a hollow water-filled tube with an outer diameter of 25 nm and an inner diameter of 15 nM. Alpha-beta heterodimers associate head-to-tail to form protofilaments running lengthwise along the microtubule wall with the beta-tubulin subunit facing the microtubule plus end conferring a structural polarity. Microtubules usually have 13 protofilaments but different protofilament numbers can be found in some organisms and specialized cells. The cofactor is Mg(2+).

It localises to the cytoplasm. It is found in the cytoskeleton. Tubulin is the major constituent of microtubules, a cylinder consisting of laterally associated linear protofilaments composed of alpha- and beta-tubulin heterodimers. Microtubules grow by the addition of GTP-tubulin dimers to the microtubule end, where a stabilizing cap forms. Below the cap, tubulin dimers are in GDP-bound state, owing to GTPase activity of alpha-tubulin. This Zea mays (Maize) protein is Tubulin beta-3 chain (TUBB3).